The following is a 118-amino-acid chain: UPF0102 protein Csac_2148 (118 aa).

The protein belongs to the UPF0102 family.

The polypeptide is UPF0102 protein Csac_2148 (Caldicellulosiruptor saccharolyticus (strain ATCC 43494 / DSM 8903 / Tp8T 6331)).